Here is a 95-residue protein sequence, read N- to C-terminus: Cell division topological specificity factor (95 aa).

It belongs to the MinE family.

Functionally, prevents the cell division inhibition by proteins MinC and MinD at internal division sites while permitting inhibition at polar sites. This ensures cell division at the proper site by restricting the formation of a division septum at the midpoint of the long axis of the cell. The chain is Cell division topological specificity factor from Psychrobacter cryohalolentis (strain ATCC BAA-1226 / DSM 17306 / VKM B-2378 / K5).